The sequence spans 664 residues: DNA ligase (664 aa).

Residues 31–35 (DSTYD), 80–81 (SL), and Glu110 contribute to the NAD(+) site. Lys112 serves as the catalytic N6-AMP-lysine intermediate. 4 residues coordinate NAD(+): Arg133, Glu167, Lys282, and Lys306. Cys400, Cys403, Cys418, and Cys423 together coordinate Zn(2+). Positions 583–664 (QSNAPLAGKT…LLEELAKYEG (82 aa)) constitute a BRCT domain.

It belongs to the NAD-dependent DNA ligase family. LigA subfamily. It depends on Mg(2+) as a cofactor. Mn(2+) is required as a cofactor.

The catalysed reaction is NAD(+) + (deoxyribonucleotide)n-3'-hydroxyl + 5'-phospho-(deoxyribonucleotide)m = (deoxyribonucleotide)n+m + AMP + beta-nicotinamide D-nucleotide.. Functionally, DNA ligase that catalyzes the formation of phosphodiester linkages between 5'-phosphoryl and 3'-hydroxyl groups in double-stranded DNA using NAD as a coenzyme and as the energy source for the reaction. It is essential for DNA replication and repair of damaged DNA. In Exiguobacterium sibiricum (strain DSM 17290 / CCUG 55495 / CIP 109462 / JCM 13490 / 255-15), this protein is DNA ligase.